A 66-amino-acid chain; its full sequence is Large ribosomal subunit protein bL35 (66 aa).

The span at 1 to 44 shows a compositional bias: basic residues; it reads MPKLKSHRGAAKRFRKTASGAIKRRGAYRNHILTKKSTKQKRHL. The tract at residues 1–48 is disordered; the sequence is MPKLKSHRGAAKRFRKTASGAIKRRGAYRNHILTKKSTKQKRHLRVEA.

This sequence belongs to the bacterial ribosomal protein bL35 family.

This chain is Large ribosomal subunit protein bL35, found in Legionella pneumophila (strain Corby).